Here is a 203-residue protein sequence, read N- to C-terminus: Mitotic spindle assembly checkpoint protein MAD2A (203 aa).

The region spanning Lys14 to Val196 is the HORMA domain. A required for assuming the closed conformation and for interaction with cdc20 region spans residues Ser194–Asp203.

Belongs to the MAD2 family. In terms of assembly, interacts with cdc20.

Its subcellular location is the nucleus. It is found in the chromosome. It localises to the centromere. The protein localises to the kinetochore. The protein resides in the cytoplasm. Functionally, component of the spindle-assembly checkpoint that prevents the onset of anaphase until all chromosomes are properly aligned at the metaphase plate. Required for the execution of the mitotic checkpoint which monitors the process of kinetochore-spindle attachment and inhibits the activity of the anaphase promoting complex until all chromosomes are aligned at the metaphase plate. This is Mitotic spindle assembly checkpoint protein MAD2A (mad2l1-1) from Dictyostelium discoideum (Social amoeba).